We begin with the raw amino-acid sequence, 375 residues long: MKFELDTTDGRARRGRLVFDRGVVETPAFMPVGTYGTVKGMTPEEVEATGAQIILGNTFHLWLRPGQEIMKLHGDLHDFMQWKGPILTDSGGFQVFSLGDIRKITEQGVHFRNPINGDPIFLDPEKSMEIQYDLGSDIVMIFDECTPYPADWDYAKRSMEMSLRWAKRSRDRFDSLGNKNALFGIIQGSVYEDLRDISVKGLVEIGFDGYAVGGLAVGEPKADMHRILEHVCPQIPADKPRYLMGVGKPEDLVEGVRRGIDMFDCVMPTRNARNGHLFVTDGVVKIRNAKHKSDTSPLDAECDCYTCRNYSRAYLHHLDRCNEILGARLNTIHNLRYYQRLMAGLRKAIEEGKLESFVTKFYQRQGRPVPPLNVD.

D89 serves as the catalytic Proton acceptor. Substrate contacts are provided by residues 89–93 (DSGGF), D143, Q187, and G214. The RNA binding stretch occupies residues 245–251 (GVGKPED). The active-site Nucleophile is D264. An RNA binding; important for wobble base 34 recognition region spans residues 269-273 (TRNAR). Zn(2+)-binding residues include C302, C304, C307, and H333.

The protein belongs to the queuine tRNA-ribosyltransferase family. As to quaternary structure, homodimer. Within each dimer, one monomer is responsible for RNA recognition and catalysis, while the other monomer binds to the replacement base PreQ1. It depends on Zn(2+) as a cofactor.

The catalysed reaction is 7-aminomethyl-7-carbaguanine + guanosine(34) in tRNA = 7-aminomethyl-7-carbaguanosine(34) in tRNA + guanine. The protein operates within tRNA modification; tRNA-queuosine biosynthesis. Catalyzes the base-exchange of a guanine (G) residue with the queuine precursor 7-aminomethyl-7-deazaguanine (PreQ1) at position 34 (anticodon wobble position) in tRNAs with GU(N) anticodons (tRNA-Asp, -Asn, -His and -Tyr). Catalysis occurs through a double-displacement mechanism. The nucleophile active site attacks the C1' of nucleotide 34 to detach the guanine base from the RNA, forming a covalent enzyme-RNA intermediate. The proton acceptor active site deprotonates the incoming PreQ1, allowing a nucleophilic attack on the C1' of the ribose to form the product. After dissociation, two additional enzymatic reactions on the tRNA convert PreQ1 to queuine (Q), resulting in the hypermodified nucleoside queuosine (7-(((4,5-cis-dihydroxy-2-cyclopenten-1-yl)amino)methyl)-7-deazaguanosine). This is Queuine tRNA-ribosyltransferase from Salmonella choleraesuis (strain SC-B67).